Reading from the N-terminus, the 462-residue chain is Integrator complex subunit 12 (462 aa).

The segment at 42-132 is disordered; the sequence is GIDSSYRPSQ…PETQSSPITV (91 aa). Polar residues predominate over residues 59 to 86; it reads ISSTKNISIKQEPKISSSLPSGNNNGKV. Lys-68 is covalently cross-linked (Glycyl lysine isopeptide (Lys-Gly) (interchain with G-Cter in SUMO2)). A compositionally biased stretch (basic and acidic residues) spans 88–124; that stretch reads TTEKVKKEAEKRPADKMKSDITEGVDIPKKPRLEKPE. Ser-128 bears the Phosphoserine mark. A PHD-type zinc finger spans residues 159–215; the sequence is GLACVVCRQMMVASGNQLVECQECHNLYHRDCHKPQVTDKEANDPRLVWYCARCTRQ. Residue Lys-254 forms a Glycyl lysine isopeptide (Lys-Gly) (interchain with G-Cter in SUMO2) linkage. Positions 301-328 are enriched in polar residues; that stretch reads SSAGPSTAKLSSTTQNNTGKPATSSANQ. Residues 301-462 form a disordered region; sequence SSAGPSTAKL…KKAAQKKLKK (162 aa). Low complexity-rich tracts occupy residues 347-358 and 382-437; these read KIGSNNSTTPTV and VSKV…GPTS. The span at 449–462 shows a compositional bias: basic residues; that stretch reads QMVKKKAAQKKLKK.

The protein belongs to the Integrator subunit 12 family. Component of the Integrator complex, composed of core subunits INTS1, INTS2, INTS3, INTS4, INTS5, INTS6, INTS7, INTS8, INTS9/RC74, INTS10, INTS11/CPSF3L, INTS12, INTS13, INTS14 and INTS15. The core complex associates with protein phosphatase 2A subunits PPP2CA and PPP2R1A, to form the Integrator-PP2A (INTAC) complex. Dephosphorylated at Ser-128 by the PNUTS-PP1 complex, promoting RNA polymerase II transcription pause-release.

It localises to the nucleus. Functionally, component of the integrator complex, a multiprotein complex that terminates RNA polymerase II (Pol II) transcription in the promoter-proximal region of genes. The integrator complex provides a quality checkpoint during transcription elongation by driving premature transcription termination of transcripts that are unfavorably configured for transcriptional elongation: the complex terminates transcription by (1) catalyzing dephosphorylation of the C-terminal domain (CTD) of Pol II subunit POLR2A/RPB1 and SUPT5H/SPT5, (2) degrading the exiting nascent RNA transcript via endonuclease activity and (3) promoting the release of Pol II from bound DNA. The integrator complex is also involved in terminating the synthesis of non-coding Pol II transcripts, such as enhancer RNAs (eRNAs), small nuclear RNAs (snRNAs), telomerase RNAs and long non-coding RNAs (lncRNAs). Mediates recruitment of cytoplasmic dynein to the nuclear envelope, probably as component of the integrator complex. In Pongo abelii (Sumatran orangutan), this protein is Integrator complex subunit 12 (INTS12).